Here is a 572-residue protein sequence, read N- to C-terminus: Neuronal acetylcholine receptor subunit alpha-9-I (572 aa).

A signal peptide spans 1-19 (MKTVVLLTWISCWIDVCTS). Residues 20–232 (AQGRYAQKLL…YTLHLKRRSL (213 aa)) lie on the Extracellular side of the membrane. N-linked (GlcNAc...) asparagine glycosylation is present at N51. C149 and C163 form a disulfide bridge. N164 is a glycosylation site (N-linked (GlcNAc...) asparagine). C213 and C214 form a disulfide bridge. The next 3 helical transmembrane spans lie at 233-253 (FYIFNLLLPCFLISFLAPLGF), 263-283 (VSLGVTVLLALTVFQLMVAES), and 297-317 (YIATMTMITASTSLTIFIMNI). The Cytoplasmic portion of the chain corresponds to 318–550 (HFCGAEAKPV…WKKVAKVMDR (233 aa)). The interval 405–458 (GHLQNHHSTHQNHLDNCRYANGGHRDDHYSNRSNQNHHSNRSQTSKGEGGEEKR) is disordered. Low complexity predominate over residues 435 to 447 (NRSNQNHHSNRSQ). Residues 551-571 (FFMWIFFIMVFLMSILIIGKA) form a helical membrane-spanning segment.

This sequence belongs to the ligand-gated ion channel (TC 1.A.9) family. Acetylcholine receptor (TC 1.A.9.1) subfamily. In terms of tissue distribution, expressed in the liver, olfactory mucosa, pituitary gland, hair cells of the saccule and spleen.

The protein resides in the postsynaptic cell membrane. It is found in the cell membrane. In Oncorhynchus mykiss (Rainbow trout), this protein is Neuronal acetylcholine receptor subunit alpha-9-I (nachra9).